We begin with the raw amino-acid sequence, 101 residues long: Small ribosomal subunit protein bS18c (101 aa).

Over residues 1-19 the composition is skewed to basic residues; it reads MNKSKRPFTKSKRSFRRRL. The interval 1-23 is disordered; sequence MNKSKRPFTKSKRSFRRRLPPIQ.

This sequence belongs to the bacterial ribosomal protein bS18 family. As to quaternary structure, part of the 30S ribosomal subunit.

Its subcellular location is the plastid. It is found in the chloroplast. The chain is Small ribosomal subunit protein bS18c from Lobularia maritima (Sweet alyssum).